A 1409-amino-acid chain; its full sequence is Mediator of RNA polymerase II transcription subunit 23 (1409 aa).

Residues 1359 to 1409 (ASAAGQGPAQGGPQSQQPQTTGQAGGQPSVPQQQQQTQQQQPQQQQQVQQQ) are disordered.

Belongs to the Mediator complex subunit 23 family. Component of the Mediator complex.

Its subcellular location is the nucleus. Its function is as follows. Component of the Mediator complex, a coactivator involved in the regulated transcription of nearly all RNA polymerase II-dependent genes. Mediator functions as a bridge to convey information from gene-specific regulatory proteins to the basal RNA polymerase II transcription machinery. Mediator is recruited to promoters by direct interactions with regulatory proteins and serves as a scaffold for the assembly of a functional preinitiation complex with RNA polymerase II and the general transcription factors. The polypeptide is Mediator of RNA polymerase II transcription subunit 23 (MED23) (Aedes aegypti (Yellowfever mosquito)).